The sequence spans 198 residues: Holliday junction branch migration complex subunit RuvA (198 aa).

The domain I stretch occupies residues 1–64 (MYEYIKGEYM…EDFIGLYGFE (64 aa)). Residues 65–143 (SLEELDMFKL…SDELLNCIDE (79 aa)) are domain II. Positions 144–154 (FDDVTQDNSLA) are flexible linker. The segment at 154 to 198 (ALSEALSALISLGYTEKEAEKVLKDVDKSESVENIIKSALVKLMG) is domain III.

This sequence belongs to the RuvA family. As to quaternary structure, homotetramer. Forms an RuvA(8)-RuvB(12)-Holliday junction (HJ) complex. HJ DNA is sandwiched between 2 RuvA tetramers; dsDNA enters through RuvA and exits via RuvB. An RuvB hexamer assembles on each DNA strand where it exits the tetramer. Each RuvB hexamer is contacted by two RuvA subunits (via domain III) on 2 adjacent RuvB subunits; this complex drives branch migration. In the full resolvosome a probable DNA-RuvA(4)-RuvB(12)-RuvC(2) complex forms which resolves the HJ.

It is found in the cytoplasm. In terms of biological role, the RuvA-RuvB-RuvC complex processes Holliday junction (HJ) DNA during genetic recombination and DNA repair, while the RuvA-RuvB complex plays an important role in the rescue of blocked DNA replication forks via replication fork reversal (RFR). RuvA specifically binds to HJ cruciform DNA, conferring on it an open structure. The RuvB hexamer acts as an ATP-dependent pump, pulling dsDNA into and through the RuvAB complex. HJ branch migration allows RuvC to scan DNA until it finds its consensus sequence, where it cleaves and resolves the cruciform DNA. This is Holliday junction branch migration complex subunit RuvA from Clostridium botulinum (strain Alaska E43 / Type E3).